Consider the following 317-residue polypeptide: Glycine--tRNA ligase alpha subunit (317 aa).

This sequence belongs to the class-II aminoacyl-tRNA synthetase family. Tetramer of two alpha and two beta subunits.

The protein resides in the cytoplasm. It carries out the reaction tRNA(Gly) + glycine + ATP = glycyl-tRNA(Gly) + AMP + diphosphate. This Cupriavidus metallidurans (strain ATCC 43123 / DSM 2839 / NBRC 102507 / CH34) (Ralstonia metallidurans) protein is Glycine--tRNA ligase alpha subunit.